A 168-amino-acid polypeptide reads, in one-letter code: Zinc-finger homeodomain protein 14 (168 aa).

The ZF-HD dimerization-type; degenerate zinc finger occupies 7-51 (YRECMRNHAAKLGSYAIDGCREYSQPSTGDLCVACGCHRSYHRRI). Positions 76 to 103 (ARLKWKTAEERNEEEEDDTEETSTEEKM) form a coiled coil. The segment at 82 to 112 (TAEERNEEEEDDTEETSTEEKMTVQRRRKSK) is disordered. The segment covering 86 to 98 (RNEEEEDDTEETS) has biased composition (acidic residues). The segment at residues 106–168 (QRRRKSKFTA…WVNNNKKFYH (63 aa)) is a DNA-binding region (homeobox).

In terms of assembly, homo- and heterodimer with other ZFHD proteins. Interacts with ZHD11. As to expression, mostly expressed in flowers and stems.

The protein resides in the nucleus. Putative transcription factor. This Arabidopsis thaliana (Mouse-ear cress) protein is Zinc-finger homeodomain protein 14 (ZHD14).